A 393-amino-acid chain; its full sequence is Lipid-A-disaccharide synthase (393 aa).

It belongs to the LpxB family.

It catalyses the reaction a lipid X + a UDP-2-N,3-O-bis[(3R)-3-hydroxyacyl]-alpha-D-glucosamine = a lipid A disaccharide + UDP + H(+). Its pathway is bacterial outer membrane biogenesis; LPS lipid A biosynthesis. Its function is as follows. Condensation of UDP-2,3-diacylglucosamine and 2,3-diacylglucosamine-1-phosphate to form lipid A disaccharide, a precursor of lipid A, a phosphorylated glycolipid that anchors the lipopolysaccharide to the outer membrane of the cell. The protein is Lipid-A-disaccharide synthase of Bordetella petrii (strain ATCC BAA-461 / DSM 12804 / CCUG 43448).